The chain runs to 341 residues: UPF0324 membrane protein SMU_2059c (341 aa).

Helical transmembrane passes span 7–24 (KLSGLVLCFLIALPAWFL), 28–47 (FPLVGAPVFAIFLGMLLAIF), 68–85 (FAVVLLGFGLNLSQVLTV), 90–107 (LPIIVATISSSLLLAFLL), 120–142 (LVGVGSSICGGSAIAATAPVIQA), 147–169 (IAQSISVIFLFNILAALIFPTLG), 178–200 (GFALFAGTAVNDTSSVTATAAAW), 211–233 (GATIVKLTRTLAIIPITLGLSFY), 254–276 (VFPMFILYFILASIITTILTALG), 291–310 (FCIVMAMGAIGLNTNIVKLV), and 317–339 (IVLGASCWIVITLVSLGMQHLLG).

This sequence belongs to the UPF0324 family.

It is found in the cell membrane. This Streptococcus mutans serotype c (strain ATCC 700610 / UA159) protein is UPF0324 membrane protein SMU_2059c.